Consider the following 123-residue polypeptide: rRNA-processing protein cgr-1 (123 aa).

A compositionally biased stretch (low complexity) spans methionine 1–glutamine 13. 2 disordered regions span residues methionine 1 to serine 47 and glutamate 85 to serine 123. Positions glutamate 49 to arginine 110 form a coiled coil. A compositionally biased stretch (basic and acidic residues) spans glutamate 85–lysine 102. Residues methionine 103–serine 123 are compositionally biased toward basic residues.

This sequence belongs to the CGR1 family.

The protein resides in the nucleus. The protein localises to the nucleolus. Its function is as follows. Involved in nucleolar integrity and required for processing of the pre-rRNA for the 60S ribosome subunit. The polypeptide is rRNA-processing protein cgr-1 (cgr-1) (Neurospora crassa (strain ATCC 24698 / 74-OR23-1A / CBS 708.71 / DSM 1257 / FGSC 987)).